The primary structure comprises 450 residues: UDP-N-acetylmuramoylalanine--D-glutamate ligase (450 aa).

115 to 121 (GTNGKTT) is a binding site for ATP.

This sequence belongs to the MurCDEF family.

It localises to the cytoplasm. It carries out the reaction UDP-N-acetyl-alpha-D-muramoyl-L-alanine + D-glutamate + ATP = UDP-N-acetyl-alpha-D-muramoyl-L-alanyl-D-glutamate + ADP + phosphate + H(+). It functions in the pathway cell wall biogenesis; peptidoglycan biosynthesis. In terms of biological role, cell wall formation. Catalyzes the addition of glutamate to the nucleotide precursor UDP-N-acetylmuramoyl-L-alanine (UMA). This chain is UDP-N-acetylmuramoylalanine--D-glutamate ligase, found in Lachnospira eligens (strain ATCC 27750 / DSM 3376 / VPI C15-48 / C15-B4) (Eubacterium eligens).